Consider the following 186-residue polypeptide: Elongation factor P (186 aa).

The protein belongs to the elongation factor P family.

It localises to the cytoplasm. It participates in protein biosynthesis; polypeptide chain elongation. In terms of biological role, involved in peptide bond synthesis. Stimulates efficient translation and peptide-bond synthesis on native or reconstituted 70S ribosomes in vitro. Probably functions indirectly by altering the affinity of the ribosome for aminoacyl-tRNA, thus increasing their reactivity as acceptors for peptidyl transferase. The chain is Elongation factor P from Prochlorococcus marinus subsp. pastoris (strain CCMP1986 / NIES-2087 / MED4).